A 300-amino-acid polypeptide reads, in one-letter code: D-alanine--D-alanine ligase (300 aa).

The region spanning 99–293 (KKILKYANIN…FAELLNSIVK (195 aa)) is the ATP-grasp domain. 126–181 (IEKIGYPVFVKPNSGGSSVATNLVKDKEGIKEAVELALKYDKEVMIENYTKGEEIT) serves as a coordination point for ATP. 3 residues coordinate Mg(2+): D248, E260, and N262.

The protein belongs to the D-alanine--D-alanine ligase family. The cofactor is Mg(2+). Requires Mn(2+) as cofactor.

It is found in the cytoplasm. The enzyme catalyses 2 D-alanine + ATP = D-alanyl-D-alanine + ADP + phosphate + H(+). It participates in cell wall biogenesis; peptidoglycan biosynthesis. Its function is as follows. Cell wall formation. In Clostridium botulinum (strain Langeland / NCTC 10281 / Type F), this protein is D-alanine--D-alanine ligase.